We begin with the raw amino-acid sequence, 456 residues long: Bestrophin homolog 18 (456 aa).

Helical transmembrane passes span 29 to 49 (WSAI…VSAI), 83 to 103 (GFFI…IGFI), 234 to 254 (IIYP…GILA), and 267 to 287 (MIDL…MGWL). The disordered stretch occupies residues 416 to 456 (ASSSRSLERQRSPGSFRMETLTPGSPTNTPIEPIDKIDKKK).

This sequence belongs to the anion channel-forming bestrophin (TC 1.A.46) family. Calcium-sensitive chloride channel subfamily. In terms of assembly, forms oligomers.

The protein localises to the cell membrane. Forms chloride channels. This Caenorhabditis elegans protein is Bestrophin homolog 18 (best-18).